The primary structure comprises 89 residues: UPF0250 protein CV_3095 (89 aa).

Belongs to the UPF0250 family.

This Chromobacterium violaceum (strain ATCC 12472 / DSM 30191 / JCM 1249 / CCUG 213 / NBRC 12614 / NCIMB 9131 / NCTC 9757 / MK) protein is UPF0250 protein CV_3095.